A 116-amino-acid polypeptide reads, in one-letter code: Dynein light chain Tctex-type 3 (116 aa).

Tyr-4 is modified (3'-nitrotyrosine).

It belongs to the dynein light chain Tctex-type family. As to quaternary structure, homodimer. The cytoplasmic dynein 1 complex consists of two catalytic heavy chains (HCs) and a number of non-catalytic subunits presented by intermediate chains (ICs), light intermediate chains (LICs) and light chains (LCs); the composition seems to vary in respect to the IC, LIC and LC composition. The heavy chain homodimer serves as a scaffold for the probable homodimeric assembly of the respective non-catalytic subunits. The ICs and LICs bind directly to the HC dimer and the LCs assemble on the IC dimer. DYNLT1 and DYNLT3 compete for association with dynein IC (DYNC1I1 or DYNC1I2). Self-associates. Interacts with DYNC1I1 and DYNC1I2. Interacts with BUB3. Interacts with SATB1 in nucleus to form complex with matrix attachment regions (MARs) of DNA.

The protein resides in the nucleus. It is found in the cytoplasm. It localises to the cytoskeleton. The protein localises to the chromosome. Its subcellular location is the centromere. The protein resides in the kinetochore. Its function is as follows. Acts as one of several non-catalytic accessory components of the cytoplasmic dynein 1 complex that are thought to be involved in linking dynein to cargos and to adapter proteins that regulate dynein function. Cytoplasmic dynein 1 acts as a motor for the intracellular retrograde motility of vesicles and organelles along microtubules. Probably binds BUB3 as part of transport cargo. Required for the efficient progression through mitosis. This is Dynein light chain Tctex-type 3 (Dynlt3) from Mus musculus (Mouse).